The following is a 212-amino-acid chain: Dephospho-CoA kinase (212 aa).

The 201-residue stretch at Ile-4 to Thr-204 folds into the DPCK domain. Cys-12–Val-17 serves as a coordination point for ATP.

It belongs to the CoaE family.

Its subcellular location is the cytoplasm. The enzyme catalyses 3'-dephospho-CoA + ATP = ADP + CoA + H(+). Its pathway is cofactor biosynthesis; coenzyme A biosynthesis; CoA from (R)-pantothenate: step 5/5. Catalyzes the phosphorylation of the 3'-hydroxyl group of dephosphocoenzyme A to form coenzyme A. The sequence is that of Dephospho-CoA kinase from Blochmanniella pennsylvanica (strain BPEN).